We begin with the raw amino-acid sequence, 66 residues long: Large ribosomal subunit protein bL31 (66 aa).

Residues cysteine 16, cysteine 18, cysteine 36, and cysteine 39 each contribute to the Zn(2+) site.

It belongs to the bacterial ribosomal protein bL31 family. Type A subfamily. In terms of assembly, part of the 50S ribosomal subunit. Requires Zn(2+) as cofactor.

Its function is as follows. Binds the 23S rRNA. The polypeptide is Large ribosomal subunit protein bL31 (Sulfurimonas denitrificans (strain ATCC 33889 / DSM 1251) (Thiomicrospira denitrificans (strain ATCC 33889 / DSM 1251))).